A 647-amino-acid chain; its full sequence is Chaperone protein DnaK (647 aa).

Phosphothreonine; by autocatalysis is present on Thr-198. A disordered region spans residues 606–634; it reads GASAEGMDPNQFQQGADNAGESNQADDDV. Positions 615-628 are enriched in polar residues; it reads NQFQQGADNAGESN.

The protein belongs to the heat shock protein 70 family.

Its function is as follows. Acts as a chaperone. This chain is Chaperone protein DnaK, found in Psychrobacter cryohalolentis (strain ATCC BAA-1226 / DSM 17306 / VKM B-2378 / K5).